Reading from the N-terminus, the 39-residue chain is Photosystem II reaction center protein J (39 aa).

Residues 9–29 (LWLVATVGGIAAITVLGIFIY) traverse the membrane as a helical segment.

This sequence belongs to the PsbJ family. As to quaternary structure, PSII is composed of 1 copy each of membrane proteins PsbA, PsbB, PsbC, PsbD, PsbE, PsbF, PsbH, PsbI, PsbJ, PsbK, PsbL, PsbM, PsbT, PsbX, PsbY, PsbZ, Psb30/Ycf12, at least 3 peripheral proteins of the oxygen-evolving complex and a large number of cofactors. It forms dimeric complexes.

It localises to the plastid. The protein localises to the chloroplast thylakoid membrane. In terms of biological role, one of the components of the core complex of photosystem II (PSII). PSII is a light-driven water:plastoquinone oxidoreductase that uses light energy to abstract electrons from H(2)O, generating O(2) and a proton gradient subsequently used for ATP formation. It consists of a core antenna complex that captures photons, and an electron transfer chain that converts photonic excitation into a charge separation. The protein is Photosystem II reaction center protein J of Pyropia yezoensis (Susabi-nori).